Reading from the N-terminus, the 227-residue chain is Cytochrome c oxidase subunit 2 (227 aa).

Residues methionine 1–serine 14 lie on the Mitochondrial intermembrane side of the membrane. The helical transmembrane segment at proline 15 to methionine 45 threads the bilayer. At leucine 46–glutamine 59 the chain is on the mitochondrial matrix side. The chain crosses the membrane as a helical span at residues glutamate 60–methionine 87. Over aspartate 88–leucine 227 the chain is Mitochondrial intermembrane. Residues histidine 161, cysteine 196, glutamate 198, cysteine 200, histidine 204, and methionine 207 each contribute to the Cu cation site. Residue glutamate 198 coordinates Mg(2+). The residue at position 218 (tyrosine 218) is a Phosphotyrosine.

Belongs to the cytochrome c oxidase subunit 2 family. In terms of assembly, component of the cytochrome c oxidase (complex IV, CIV), a multisubunit enzyme composed of 14 subunits. The complex is composed of a catalytic core of 3 subunits MT-CO1, MT-CO2 and MT-CO3, encoded in the mitochondrial DNA, and 11 supernumerary subunits COX4I, COX5A, COX5B, COX6A, COX6B, COX6C, COX7A, COX7B, COX7C, COX8 and NDUFA4, which are encoded in the nuclear genome. The complex exists as a monomer or a dimer and forms supercomplexes (SCs) in the inner mitochondrial membrane with NADH-ubiquinone oxidoreductase (complex I, CI) and ubiquinol-cytochrome c oxidoreductase (cytochrome b-c1 complex, complex III, CIII), resulting in different assemblies (supercomplex SCI(1)III(2)IV(1) and megacomplex MCI(2)III(2)IV(2)). Found in a complex with TMEM177, COA6, COX18, COX20, SCO1 and SCO2. Interacts with TMEM177 in a COX20-dependent manner. Interacts with COX20. Interacts with COX16. Cu cation serves as cofactor.

Its subcellular location is the mitochondrion inner membrane. The enzyme catalyses 4 Fe(II)-[cytochrome c] + O2 + 8 H(+)(in) = 4 Fe(III)-[cytochrome c] + 2 H2O + 4 H(+)(out). Component of the cytochrome c oxidase, the last enzyme in the mitochondrial electron transport chain which drives oxidative phosphorylation. The respiratory chain contains 3 multisubunit complexes succinate dehydrogenase (complex II, CII), ubiquinol-cytochrome c oxidoreductase (cytochrome b-c1 complex, complex III, CIII) and cytochrome c oxidase (complex IV, CIV), that cooperate to transfer electrons derived from NADH and succinate to molecular oxygen, creating an electrochemical gradient over the inner membrane that drives transmembrane transport and the ATP synthase. Cytochrome c oxidase is the component of the respiratory chain that catalyzes the reduction of oxygen to water. Electrons originating from reduced cytochrome c in the intermembrane space (IMS) are transferred via the dinuclear copper A center (CU(A)) of subunit 2 and heme A of subunit 1 to the active site in subunit 1, a binuclear center (BNC) formed by heme A3 and copper B (CU(B)). The BNC reduces molecular oxygen to 2 water molecules using 4 electrons from cytochrome c in the IMS and 4 protons from the mitochondrial matrix. The polypeptide is Cytochrome c oxidase subunit 2 (MT-CO2) (Nycticebus coucang (Slow loris)).